Here is a 172-residue protein sequence, read N- to C-terminus: Small ribosomal subunit protein uS5 (172 aa).

Residues 16 to 79 enclose the S5 DRBM domain; it reads LKDRLVAINR…ESAKKNLVKV (64 aa).

This sequence belongs to the universal ribosomal protein uS5 family. In terms of assembly, part of the 30S ribosomal subunit. Contacts proteins S4 and S8.

With S4 and S12 plays an important role in translational accuracy. In terms of biological role, located at the back of the 30S subunit body where it stabilizes the conformation of the head with respect to the body. This chain is Small ribosomal subunit protein uS5, found in Bacteroides thetaiotaomicron (strain ATCC 29148 / DSM 2079 / JCM 5827 / CCUG 10774 / NCTC 10582 / VPI-5482 / E50).